Here is a 154-residue protein sequence, read N- to C-terminus: Large ribosomal subunit protein uL13 (154 aa).

Belongs to the universal ribosomal protein uL13 family. Part of the 50S ribosomal subunit.

Its function is as follows. This protein is one of the early assembly proteins of the 50S ribosomal subunit, although it is not seen to bind rRNA by itself. It is important during the early stages of 50S assembly. The sequence is that of Large ribosomal subunit protein uL13 from Sinorhizobium medicae (strain WSM419) (Ensifer medicae).